Here is a 229-residue protein sequence, read N- to C-terminus: MNDHVIYTQSDVGLNQFFAKIYSLVGMGVGLSAFVSYLMLYPFRENLISILVNQPMIYYGAAIIELILVFVASGAARKNTPAALPIFLIYAALNGFTLSFIIVAYAQTTVFQAFLSSAAVFFAMSIIGVKTKRDMSGLRKAMFAALIGVVVASLINLFIGSGMMSYVISVISVLIFSGLIASDNQMIKRVYQATNGQVGDGWAVAMALSLYLDFINLFISLLRIFGRND.

The next 7 membrane-spanning stretches (helical) occupy residues 21 to 41 (IYSL…LMLY), 56 to 76 (MIYY…SGAA), 83 to 103 (ALPI…FIIV), 109 to 129 (TVFQ…IIGV), 141 to 161 (AMFA…FIGS), 162 to 182 (GMMS…LIAS), and 202 to 222 (WAVA…ISLL).

The protein belongs to the BI1 family.

It localises to the cell membrane. This is an uncharacterized protein from Streptococcus pyogenes serotype M3 (strain ATCC BAA-595 / MGAS315).